The chain runs to 161 residues: Probable endopeptidase HI_1314 (161 aa).

Residues Met1 to Ala18 form the signal peptide. The N-palmitoyl cysteine moiety is linked to residue Cys19. The S-diacylglycerol cysteine moiety is linked to residue Cys19. In terms of domain architecture, NlpC/P60 spans Ile39 to Ile161. The active-site Nucleophile is Cys69. Catalysis depends on His122, which acts as the Proton acceptor. His134 is a catalytic residue.

The protein belongs to the peptidase C40 family.

The protein resides in the cell membrane. The chain is Probable endopeptidase HI_1314 from Haemophilus influenzae (strain ATCC 51907 / DSM 11121 / KW20 / Rd).